Consider the following 177-residue polypeptide: ATP synthase subunit delta (177 aa).

It belongs to the ATPase delta chain family. In terms of assembly, F-type ATPases have 2 components, F(1) - the catalytic core - and F(0) - the membrane proton channel. F(1) has five subunits: alpha(3), beta(3), gamma(1), delta(1), epsilon(1). F(0) has three main subunits: a(1), b(2) and c(10-14). The alpha and beta chains form an alternating ring which encloses part of the gamma chain. F(1) is attached to F(0) by a central stalk formed by the gamma and epsilon chains, while a peripheral stalk is formed by the delta and b chains.

It localises to the cell inner membrane. In terms of biological role, f(1)F(0) ATP synthase produces ATP from ADP in the presence of a proton or sodium gradient. F-type ATPases consist of two structural domains, F(1) containing the extramembraneous catalytic core and F(0) containing the membrane proton channel, linked together by a central stalk and a peripheral stalk. During catalysis, ATP synthesis in the catalytic domain of F(1) is coupled via a rotary mechanism of the central stalk subunits to proton translocation. Functionally, this protein is part of the stalk that links CF(0) to CF(1). It either transmits conformational changes from CF(0) to CF(1) or is implicated in proton conduction. This Glaesserella parasuis serovar 5 (strain SH0165) (Haemophilus parasuis) protein is ATP synthase subunit delta.